A 247-amino-acid chain; its full sequence is Probable transcriptional regulatory protein SynWH7803_1972 (247 aa).

It belongs to the TACO1 family.

It is found in the cytoplasm. This is Probable transcriptional regulatory protein SynWH7803_1972 from Synechococcus sp. (strain WH7803).